The sequence spans 129 residues: MSGSKYKPAPLATLPSTLDPAEYDVSPETRRAQVERLSIRARLKREYLLQYNDPKRVSHIEDPALIRWTYARSANIYPNFRPTPKNSLLGAVAGFGPLIFWYYVFKTDRDRKERLIQEGKLDRKFNISY.

Serine 2 carries the N-acetylserine modification. Serine 26 carries the phosphoserine modification. Residues 88 to 105 traverse the membrane as a helical segment; that stretch reads LLGAVAGFGPLIFWYYVF.

Belongs to the complex I NDUFB4 subunit family. In terms of assembly, complex I is composed of 45 different subunits.

It localises to the mitochondrion inner membrane. Functionally, accessory subunit of the mitochondrial membrane respiratory chain NADH dehydrogenase (Complex I), that is believed not to be involved in catalysis. Complex I functions in the transfer of electrons from NADH to the respiratory chain. The immediate electron acceptor for the enzyme is believed to be ubiquinone. This chain is NADH dehydrogenase [ubiquinone] 1 beta subcomplex subunit 4 (Ndufb4), found in Mus musculus (Mouse).